A 421-amino-acid chain; its full sequence is UPF0229 protein lpl2726 (421 aa).

Positions 83-110 (IAGDRIKRPGGGGSGGAGGNASDSGEGE) are disordered. Residues 91 to 101 (PGGGGSGGAGG) show a composition bias toward gly residues.

This sequence belongs to the UPF0229 family.

This chain is UPF0229 protein lpl2726, found in Legionella pneumophila (strain Lens).